We begin with the raw amino-acid sequence, 150 residues long: MGKSILLINGPNLNLLGTREPHIYGNTTLADVEASCKAHAESLGATLATFQSNHEGAIIDRIQAARGNVDGIIINPGAFTHTSVAIRDALLGVGIPFIELHVSNVHAREPWRHHSYFSDKAAGIIVGLGVYGYKVAVEHVALNFKERAAL.

The Proton acceptor role is filled by Tyr-24. Substrate-binding residues include Asn-75, His-81, and Asp-88. His-101 (proton donor) is an active-site residue. Substrate-binding positions include 102–103 (VS) and Arg-112.

This sequence belongs to the type-II 3-dehydroquinase family. As to quaternary structure, homododecamer. Adopts a ring-like structure, composed of an arrangement of two hexameric rings stacked on top of one another.

It carries out the reaction 3-dehydroquinate = 3-dehydroshikimate + H2O. It participates in aromatic compound metabolism; 3,4-dihydroxybenzoate biosynthesis; 3,4-dihydroxybenzoate from 3-dehydroquinate: step 1/2. Functionally, is involved in the catabolism of quinate. Allows the utilization of quinate as carbon source via the beta-ketoadipate pathway. This is Catabolic 3-dehydroquinase 1 from Aspergillus fumigatus (strain ATCC MYA-4609 / CBS 101355 / FGSC A1100 / Af293) (Neosartorya fumigata).